Here is a 227-residue protein sequence, read N- to C-terminus: Orotidine 5'-phosphate decarboxylase (227 aa).

Residues aspartate 8, lysine 30, 59–68, threonine 118, arginine 178, glutamine 187, glycine 207, and arginine 208 each bind substrate; that span reads DLKLYDIPYT. Lysine 61 functions as the Proton donor in the catalytic mechanism.

Belongs to the OMP decarboxylase family. Type 1 subfamily. As to quaternary structure, homodimer.

It carries out the reaction orotidine 5'-phosphate + H(+) = UMP + CO2. The protein operates within pyrimidine metabolism; UMP biosynthesis via de novo pathway; UMP from orotate: step 2/2. In terms of biological role, catalyzes the decarboxylation of orotidine 5'-monophosphate (OMP) to uridine 5'-monophosphate (UMP). This chain is Orotidine 5'-phosphate decarboxylase, found in Helicobacter pylori (strain Shi470).